The chain runs to 926 residues: Staphylococcal nuclease domain-containing protein 1 (926 aa).

Positions 1 to 17 are enriched in low complexity; sequence MATAANTATAAGAAKDA. The interval 1 to 24 is disordered; it reads MATAANTATAAGAAKDAPPAPTKS. TNase-like domains lie at 23–167, 195–333, 346–505, and 535–674; these read KSLS…KWSP, NPVK…QWQD, KDFS…LHAK, and LRTE…IWTN. The Tudor domain occupies 749-807; that stretch reads TPKRGDLVAAQFTLDNQWYRAKVERVQGSNATVLYIDYGNKETLPTNRLAALPPAFSSE. The involved in dimethylarginine binding stretch occupies residues 760-788; that stretch reads FTLDNQWYRAKVERVQGSNATVLYIDYGN.

In terms of assembly, associates with the RNA-induced silencing complex (RISC). Interacts with the RISC components AGO2, Fmr1 and vig. Interacts with piwi. As to expression, expressed in adult ovaries and testis (at protein level).

The protein resides in the cytoplasm. Its subcellular location is the nucleus. It carries out the reaction Endonucleolytic cleavage to nucleoside 3'-phosphates and 3'-phosphooligonucleotide end-products.. Its function is as follows. Endonuclease which shows activity towards both DNA and RNA substrates. Has a role in translation regulation throught its association with the with the RNA-induced silencing complex (RISC). Plays a role in spermatogenesis probably by negatively regulating piwi expression in the germline. Together with piwi, might be involved in transposon repression in the germline. The sequence is that of Staphylococcal nuclease domain-containing protein 1 from Drosophila melanogaster (Fruit fly).